The following is a 332-amino-acid chain: Ribosomal RNA small subunit methyltransferase H (332 aa).

S-adenosyl-L-methionine is bound by residues 36-38 (GGY), Asp-54, Phe-81, Asp-102, and Gln-109. Residues 284–332 (VTAGQEEVSANPRARSAKLRAAERTAAPATADDGESPGWPSLANVMRGG) are disordered.

It belongs to the methyltransferase superfamily. RsmH family.

Its subcellular location is the cytoplasm. It carries out the reaction cytidine(1402) in 16S rRNA + S-adenosyl-L-methionine = N(4)-methylcytidine(1402) in 16S rRNA + S-adenosyl-L-homocysteine + H(+). Functionally, specifically methylates the N4 position of cytidine in position 1402 (C1402) of 16S rRNA. The chain is Ribosomal RNA small subunit methyltransferase H from Nitrobacter hamburgensis (strain DSM 10229 / NCIMB 13809 / X14).